The sequence spans 453 residues: Pup--protein ligase (453 aa).

Position 9 (Glu-9) interacts with Mg(2+). Residue Arg-53 coordinates ATP. Tyr-55 is a binding site for Mg(2+). The Proton acceptor role is filled by Asp-57. A Mg(2+)-binding site is contributed by Glu-63. ATP is bound by residues Thr-66 and Trp-420.

Belongs to the Pup ligase/Pup deamidase family. Pup-conjugating enzyme subfamily.

It catalyses the reaction ATP + [prokaryotic ubiquitin-like protein]-L-glutamate + [protein]-L-lysine = ADP + phosphate + N(6)-([prokaryotic ubiquitin-like protein]-gamma-L-glutamyl)-[protein]-L-lysine.. The protein operates within protein degradation; proteasomal Pup-dependent pathway. It participates in protein modification; protein pupylation. Catalyzes the covalent attachment of the prokaryotic ubiquitin-like protein modifier Pup to the proteasomal substrate proteins, thereby targeting them for proteasomal degradation. This tagging system is termed pupylation. The ligation reaction involves the side-chain carboxylate of the C-terminal glutamate of Pup and the side-chain amino group of a substrate lysine. The polypeptide is Pup--protein ligase (Kineococcus radiotolerans (strain ATCC BAA-149 / DSM 14245 / SRS30216)).